The chain runs to 1479 residues: Tyrosine-protein kinase BAZ1B (1479 aa).

The WAC domain occupies 20–126 (EPLFTIPHTQ…GEECDFEVGK (107 aa)). The disordered stretch occupies residues 146–212 (EAVEKKSDGA…TSLKKGERKW (67 aa)). Basic and acidic residues-rich tracts occupy residues 148-165 (VEKK…DKEN) and 173-195 (LQKK…DRAR). Residues Ser-152, Ser-158, and Ser-161 each carry the phosphoserine modification. The C motif motif lies at 207-213 (KGERKWA). Thr-266 is modified (phosphothreonine). Residues 302–333 (NPSTKRRNTGSPDRKPSKKPKRDSSSLSSPLN) are disordered. 5 positions are modified to phosphoserine: Ser-325, Ser-330, Ser-345, Ser-361, and Ser-374. Disordered regions lie at residues 376 to 433 (NNNK…KTPK) and 448 to 472 (TQKM…HKHL). The segment covering 381–396 (HSFHIPKKGPAAKKPG) has biased composition (basic residues). Residues 415-425 (GQKSTGNSKSP) show a composition bias toward polar residues. The segment covering 454 to 465 (TPRSSGGVPRSS) has biased composition (low complexity). Residues 537 to 587 (ASMSEEQRKEYLKKKRQELKERLREKAKERREREMLERLEKQKRFEDQELG) are a coiled coil. Positions 605-669 (NTLFGDVALV…LQTLLQDEIA (65 aa)) constitute a DDT domain. Residues Ser-706, Ser-709, and Ser-717 each carry the phosphoserine modification. A coiled-coil region spans residues 774-809 (SAELWKERLAVLKEENDKKRAEKQKRKEMEARNKEN). Residues 789–813 (NDKKRAEKQKRKEMEARNKENGKEE) are disordered. Lys-827 is covalently cross-linked (Glycyl lysine isopeptide (Lys-Gly) (interchain with G-Cter in SUMO1); alternate). Lys-827 participates in a covalent cross-link: Glycyl lysine isopeptide (Lys-Gly) (interchain with G-Cter in SUMO2); alternate. Residues Lys-854, Lys-1043, Lys-1089, and Lys-1107 each participate in a glycyl lysine isopeptide (Lys-Gly) (interchain with G-Cter in SUMO2) cross-link. Residues 854–890 (KRKREIQERETKVRLEREAEEERMRKHKAAAEKAFQE) are a coiled coil. The segment at 1184-1234 (NARCKVCRKKGEDDKLILCDECNKAFHLFCLRPALYEVPDGEWQCPACQPP) adopts a PHD-type zinc-finger fold. A disordered region spans residues 1231–1324 (CQPPTARRNS…SRPKDDPEVD (94 aa)). Over residues 1254–1277 (SEGDESGEEEEEEEEEEEEEEDYE) the composition is skewed to acidic residues. Residues 1257-1284 (DESGEEEEEEEEEEEEEEDYEVAGLRLR) are a coiled coil. The segment covering 1305 to 1316 (PGKKSHPARRSR) has biased composition (basic residues). A Phosphoserine modification is found at Ser-1315. Lys-1331 is modified (N6-acetyllysine). Residues 1335–1439 (RRQSLELQKC…QCLLALLQKH (105 aa)) form the Bromo domain. Phosphoserine is present on residues Ser-1338, Ser-1464, Ser-1466, and Ser-1468. The segment at 1451–1479 (RKFPDRLADDEGDSDSESVGQSRGRRQKK) is disordered.

This sequence belongs to the WAL family. BAZ1B subfamily. In terms of assembly, component of the WICH-1 ISWI chromatin remodeling complex, at least composed of SMARCA1 and BAZ1B/WSTF, which regulates the spacing of histone octamers on the DNA template to facilitate access to DNA. Within the WICH-1 ISWI chromatin remodeling complex interacts with SMARCA1; the interaction is direct. Component of the WICH-5 ISWI chromatin remodeling complex (also called the WICH complex), at least composed of SMARCA5/SNF2H and BAZ1B/WSTF, which regulates the spacing of histone octamers on the DNA template to facilitate access to DNA. Within the WICH-5 ISWI chromatin remodeling complex interacts with SMARCA5/SNF2H; the interaction is direct. Component of the B-WICH chromatin remodeling complex, at least composed of SMARCA5/SNF2H, BAZ1B/WSTF, SF3B1, DEK, MYO1C, ERCC6, MYBBP1A and DDX21. Within the B-WICH chromatin remodeling complex, interacts with SMARCA5/SNF2H, DDX21, DEK, MYBBP1A, SF3B1 and ERCC6. Interacts with MYO1C. Interacts with PCNA; the interaction is direct and is required for BAZ1B/WSTF binding to replication foci during S phase. Interacts with CDT1. Mn(2+) is required as a cofactor.

It localises to the nucleus. It catalyses the reaction L-tyrosyl-[protein] + ATP = O-phospho-L-tyrosyl-[protein] + ADP + H(+). Its function is as follows. Atypical tyrosine-protein kinase that plays a central role in chromatin remodeling and acts as a transcription regulator. Involved in DNA damage response by phosphorylating 'Tyr-142' of histone H2AX (H2AXY142ph). H2AXY142ph plays a central role in DNA repair and acts as a mark that distinguishes between apoptotic and repair responses to genotoxic stress. Regulatory subunit of the ATP-dependent WICH-1 and WICH-5 ISWI chromatin remodeling complexes, which form ordered nucleosome arrays on chromatin and facilitate access to DNA during DNA-templated processes such as DNA replication, transcription, and repair. Both complexes regulate the spacing of nucleosomes along the chromatin and have the ability to slide mononucleosomes to the center of a DNA template. The WICH-1 ISWI chromatin remodeling complex has a lower ATP hydrolysis rate than the WICH-5 ISWI chromatin remodeling complex. The WICH-5 ISWI chromatin remodeling complex regulates the transcription of various genes, has a role in RNA polymerase I transcription. Within the B-WICH complex has a role in RNA polymerase III transcription. Mediates the recruitment of the WICH-5 ISWI chromatin remodeling complex to replication foci during DNA replication. In Mus musculus (Mouse), this protein is Tyrosine-protein kinase BAZ1B (Baz1b).